Reading from the N-terminus, the 520-residue chain is MTLRIVTPGSNTSLIQPGFSLLHFSSHVFYLGQKGWPKRSCPTGVFLLDLKNNDLKLRPATFTNDSCYLPPLRHPAVCSFSASQGGEITQYLIHGGKTPNNEISHKLYIMTMAFPVNKRFSLCCSEKDLAGDVPEARYGHSMNVVFSRGKNAVVMFGGRSYMPLNQRTTENWNNVIDCEPLVYLIDLQFGCSTSFNLRELQDGLSFHVSLARNDTVYIFGGHSLGNNFRPPNVYKIKVDLPLGSPAVSCTVINSKISFSSSIVTQTSPDEFVIVGGYESDSQKRLICNGVFLDDETIDIQEIETPDWTGEIKHSKTWFGADMGKGAVLFGIPVDNKHQSTDCSFFFYVLNFGDNDPALQTCSQGSTEEQEDSMPLEDSEEFTFNRDGNIFDEDTYNEDDEDDESVTGYWIKCCPDCDMDRNTWEPFYSTELNKPSMIFCSKDGGHWVHSQCMDLSETMLKYLSQNNIKYFCNEHVEVARGVQTPEKTPPVKKTSLKSVRKRTTINRLSAVKKSFLRRLFE.

Cys412, Cys416, Cys439, His445, His448, Cys451, Cys471, and His474 together coordinate Zn(2+). The PHD-type; atypical zinc-finger motif lies at 415-477; the sequence is DCDMDRNTWE…KYFCNEHVEV (63 aa).

The protein belongs to the RAG2 family. Component of the RAG complex composed of core components rag1 and rag2. As to expression, expressed within the thymus, liver and spleen in juvenile frogs, and within the thymus and bone marrow of adults. A lower level expression is seen in the ovaries.

It localises to the nucleus. In terms of biological role, core component of the RAG complex, a multiprotein complex that mediates the DNA cleavage phase during V(D)J recombination. V(D)J recombination assembles a diverse repertoire of immunoglobulin and T-cell receptor genes in developing B and T lymphocytes through rearrangement of different V (variable), in some cases D (diversity), and J (joining) gene segments. DNA cleavage by the RAG complex occurs in 2 steps: a first nick is introduced in the top strand immediately upstream of the heptamer, generating a 3'-hydroxyl group that can attack the phosphodiester bond on the opposite strand in a direct transesterification reaction, thereby creating 4 DNA ends: 2 hairpin coding ends and 2 blunt, 5'-phosphorylated ends. In the RAG complex, rag2 is not the catalytic component but is required for all known catalytic activities mediated by RAG1. It probably acts as a sensor of chromatin state that recruits the RAG complex to H3K4me3. The sequence is that of V(D)J recombination-activating protein 2 (rag2) from Xenopus laevis (African clawed frog).